Here is a 98-residue protein sequence, read N- to C-terminus: NADH-ubiquinone oxidoreductase chain 4L (98 aa).

3 helical membrane passes run 1–21, 29–49, and 61–81; these read MTLI…GLLM, ALLC…LTIL, and IILL…LVMV.

This sequence belongs to the complex I subunit 4L family. In terms of assembly, core subunit of respiratory chain NADH dehydrogenase (Complex I) which is composed of 45 different subunits.

It is found in the mitochondrion inner membrane. It carries out the reaction a ubiquinone + NADH + 5 H(+)(in) = a ubiquinol + NAD(+) + 4 H(+)(out). Core subunit of the mitochondrial membrane respiratory chain NADH dehydrogenase (Complex I) which catalyzes electron transfer from NADH through the respiratory chain, using ubiquinone as an electron acceptor. Part of the enzyme membrane arm which is embedded in the lipid bilayer and involved in proton translocation. The sequence is that of NADH-ubiquinone oxidoreductase chain 4L (MT-ND4L) from Balaenoptera borealis (Sei whale).